A 224-amino-acid chain; its full sequence is Glutathione S-transferase U28 (224 aa).

A GST N-terminal domain is found at 6 to 85 (SKVVVLDFWA…YIDETWTDAA (80 aa)). Glutathione-binding positions include 16–17 (SP), 42–43 (NK), 56–57 (KV), and 69–70 (ES). Residues 91 to 217 (DPQSRATARF…EKVYQQVLKL (127 aa)) enclose the GST C-terminal domain. Residue threonine 154 is modified to Phosphothreonine.

This sequence belongs to the GST superfamily. Tau family.

It is found in the cytoplasm. The protein resides in the cytosol. It catalyses the reaction RX + glutathione = an S-substituted glutathione + a halide anion + H(+). Its function is as follows. May be involved in the conjugation of reduced glutathione to a wide number of exogenous and endogenous hydrophobic electrophiles and have a detoxification role against certain herbicides. The protein is Glutathione S-transferase U28 (GSTU28) of Arabidopsis thaliana (Mouse-ear cress).